Reading from the N-terminus, the 184-residue chain is Signal peptidase complex catalytic subunit SEC11 (184 aa).

Over 1–28 (MDFIKEQYNSLVLDLRKTFRNKRDGLSH) the chain is Cytoplasmic. Residues 29-49 (ILNVICLLLNALMIWKLLVVF) form a helical; Signal-anchor for type II membrane protein membrane-spanning segment. At 50–184 (TGCESPVVVV…MLIMILMGYE (135 aa)) the chain is on the lumenal side. Residues serine 63, histidine 101, and aspartate 127 each act as charge relay system in the active site. The tract at residues 170 to 181 (AIVSIMLIMILM) is C-terminal short (CTS) helix.

This sequence belongs to the peptidase S26B family. In terms of assembly, component of the signal peptidase complex (SPC) composed of a catalytic subunit SEC11/SPC21 and three accessory subunits SPC25, SPC3/SPC22, SPC1/SPC12. Within the complex, interacts with SPC25. The complex induces a local thinning of the ER membrane which is used to measure the length of the signal peptide (SP) h-region of protein substrates. This ensures the selectivity of the complex towards h-regions shorter than 18-20 amino acids. The complex interacts with the SEC61 channel-forming translocon complex and is involved in the import of classical signal sequence-containing proteins. Phosphorylated. Phosphorylation increases catalytic activity.

It is found in the endoplasmic reticulum membrane. The catalysed reaction is Cleavage of hydrophobic, N-terminal signal or leader sequences from secreted and periplasmic proteins.. With respect to regulation, phosphorylation increases catalytic activity. Ca(2+) slightly increases catalytic activity in vitro. In terms of biological role, catalytic component of the signal peptidase complex (SPC) which catalyzes the cleavage of N-terminal signal sequences from nascent proteins as they are translocated into the lumen of the endoplasmic reticulum. Specifically cleaves N-terminal signal peptides that contain a hydrophobic alpha-helix (h-region) shorter than 18-20 amino acids. The protein is Signal peptidase complex catalytic subunit SEC11 of Plasmodium falciparum (isolate 3D7).